Here is a 316-residue protein sequence, read N- to C-terminus: BTB/POZ domain-containing adapter for CUL3-mediated RhoA degradation protein 2 (316 aa).

The BTB domain maps to 28–96 (KYVQLNVGGS…LRDDTITLPQ (69 aa)). Residues 268 to 279 (EATSRSRSQASP) show a composition bias toward polar residues. The segment at 268 to 288 (EATSRSRSQASPSEDEDTFEL) is disordered. A Phosphoserine modification is found at Ser278. Phosphoserine; by CK2 is present on Ser280.

This sequence belongs to the BACURD family. Component of the BCR(TNFAIP1) E3 ubiquitin ligase complex, at least composed of CUL3, TNFAIP1/BACURD2 and RBX1. Interacts with RHOA; with a preference for RhoA-GDP. Interacts with RHOB. Interacts with PCNA. Interacts with CSNK2B. Post-translationally, phosphorylation at Ser-280 by CK2 facilitates the nucleus localization and increases interaction with PCNA.

It localises to the cytoplasm. Its subcellular location is the nucleus. The protein resides in the endosome. It functions in the pathway protein modification; protein ubiquitination. Substrate-specific adapter of a BCR (BTB-CUL3-RBX1) E3 ubiquitin-protein ligase complex involved in regulation of cytoskeleton structure. The BCR(TNFAIP1) E3 ubiquitin ligase complex mediates the ubiquitination of RHOA, leading to its degradation by the proteasome, thereby regulating the actin cytoskeleton and cell migration. Its interaction with RHOB may regulate apoptosis. May enhance the PCNA-dependent DNA polymerase delta activity. In Mus musculus (Mouse), this protein is BTB/POZ domain-containing adapter for CUL3-mediated RhoA degradation protein 2 (Tnfaip1).